A 209-amino-acid chain; its full sequence is MVEPREQFFQDLLSAVDKQMDTVKNDIKDIMKEKTSFMASFENFIERYDTMEKNIQDLQNKYEEMAINLAAVMTDTKIQLGAIIAQLEILMINGTPLPAKKTTIKEATPLPSSNTNNEQSMSTYSSSISGKTSETVKKNPTNAMFFTRSEWASSKEFREKFLTPEIQAILDEQFANKTGIERLHAEGLYMWRTQFSDEQKKMVKEMMKK.

Residues 13-75 adopt a coiled-coil conformation; the sequence is LSAVDKQMDT…AINLAAVMTD (63 aa). The segment at 107–135 is disordered; that stretch reads ATPLPSSNTNNEQSMSTYSSSISGKTSET. A compositionally biased stretch (polar residues) spans 110-119; it reads LPSSNTNNEQ. Residues 120 to 133 show a composition bias toward low complexity; sequence SMSTYSSSISGKTS.

It belongs to the asfivirus K205R family.

The protein resides in the host cytoplasm. Functionally, induces host endoplasmic reticulum stress and consequently activates autophagy and NF-kappa-B signaling pathway. In turn, may induce autophagy-mediated STING1 degradation and innate immune evasion. This is an uncharacterized protein from Ornithodoros (relapsing fever ticks).